Here is a 218-residue protein sequence, read N- to C-terminus: Glutathione S-transferase Mu 1 (218 aa).

Positions 2–88 constitute a GST N-terminal domain; sequence PMILGYWDIR…YIARKHNLCG (87 aa). 7–8 contributes to the glutathione binding site; the sequence is YW. Threonine 34 is subject to Phosphothreonine. Glutathione contacts are provided by residues 43 to 46, lysine 50, 59 to 60, and 72 to 73; these read RSQW, NL, and QS. The GST C-terminal domain maps to 90–208; that stretch reads TEEEKIRVDI…KSSRFLPRPV (119 aa). Tyrosine 116 lines the substrate pocket. Serine 210 is subject to Phosphoserine.

This sequence belongs to the GST superfamily. Mu family. Homodimer. As to expression, liver (at protein level).

It is found in the cytoplasm. The enzyme catalyses RX + glutathione = an S-substituted glutathione + a halide anion + H(+). It catalyses the reaction prostaglandin A2 + glutathione = prostaglandin A2-S-(R)-glutathione. It carries out the reaction prostaglandin J2 + glutathione = prostaglandin J2-S-(R)-glutathione. The catalysed reaction is prostaglandin J2 + glutathione = prostaglandin J2-S-(S)-glutathione. The enzyme catalyses prostaglandin A2 + glutathione = prostaglandin A2-S-(S)-glutathione. It catalyses the reaction 11(S)-hydroxy-14(S),15(S)-epoxy-(5Z,8Z,12E)-eicosatrienoate + glutathione = (11S,15S)-dihydroxy-14(R)-S-glutathionyl-(5Z,8Z,12E)-eicosatrienoate. Conjugation of reduced glutathione to a wide number of exogenous and endogenous hydrophobic electrophiles. Involved in the formation of glutathione conjugates of both prostaglandin A2 (PGA2) and prostaglandin J2 (PGJ2). Participates in the formation of novel hepoxilin regioisomers. The sequence is that of Glutathione S-transferase Mu 1 from Homo sapiens (Human).